The following is a 704-amino-acid chain: Serotransferrin (704 aa).

The signal sequence occupies residues 1–19 (MRPAVRALLACAVLGLCLA). Transferrin-like domains lie at 25–351 (VRWC…NLRE) and 364–689 (VKWC…NLRQ). Disulfide bonds link C28-C66 and C38-C57. Dimethylated arginine is present on R42. Fe(3+) contacts are provided by D81 and Y113. Cystine bridges form between C136/C217, C176/C192, C179/C200, C189/C202, and C250/C264. Positions 138, 142, 144, and 145 each coordinate hydrogencarbonate. Y211 serves as a coordination point for Fe(3+). H272 is a Fe(3+) binding site. Cystine bridges form between C362–C622, C367–C399, C377–C390, C424–C699, C441–C663, C473–C549, C497–C690, C507–C521, C518–C532, C589–C603, and C641–C646. Fe(3+)-binding residues include D414 and Y449. Hydrogencarbonate is bound by residues T475, R479, A481, and G482. An N-linked (GlcNAc...) asparagine glycan is attached at N514. Y543 lines the Fe(3+) pocket. A Fe(3+)-binding site is contributed by H611. Residue S691 is modified to Phosphoserine.

This sequence belongs to the transferrin family. In terms of assembly, monomer. Part of a complex composed of SLC40A1/ferroportin, TF/transferrin and HEPH/hephaestin that transfers iron from cells to transferrin. As to expression, expressed by the liver and secreted in plasma.

It localises to the secreted. Transferrins are iron binding transport proteins which can bind two Fe(3+) ions in association with the binding of an anion, usually bicarbonate. It is responsible for the transport of iron from sites of absorption and heme degradation to those of storage and utilization. Serum transferrin may also have a further role in stimulating cell proliferation. The polypeptide is Serotransferrin (TF) (Bos taurus (Bovine)).